Reading from the N-terminus, the 265-residue chain is Adenosylcobinamide-GDP ribazoletransferase (265 aa).

The next 5 membrane-spanning stretches (helical) occupy residues 59-79, 113-133, 141-161, 183-203, and 206-226; these read LSWI…SVLI, IGTF…LLLV, WIFL…ALLL, LPPF…VYFL, and FQNQ…FVFY.

Belongs to the CobS family. Mg(2+) serves as cofactor.

It is found in the cell inner membrane. It carries out the reaction alpha-ribazole + adenosylcob(III)inamide-GDP = adenosylcob(III)alamin + GMP + H(+). The enzyme catalyses alpha-ribazole 5'-phosphate + adenosylcob(III)inamide-GDP = adenosylcob(III)alamin 5'-phosphate + GMP + H(+). It participates in cofactor biosynthesis; adenosylcobalamin biosynthesis; adenosylcobalamin from cob(II)yrinate a,c-diamide: step 7/7. Its function is as follows. Joins adenosylcobinamide-GDP and alpha-ribazole to generate adenosylcobalamin (Ado-cobalamin). Also synthesizes adenosylcobalamin 5'-phosphate from adenosylcobinamide-GDP and alpha-ribazole 5'-phosphate. The protein is Adenosylcobinamide-GDP ribazoletransferase of Leptospira interrogans serogroup Icterohaemorrhagiae serovar copenhageni (strain Fiocruz L1-130).